The chain runs to 135 residues: uncharacterized protein (135 aa).

The interval 56-135 is disordered; it reads VQSHNRGINN…QKGQLKIEKV (80 aa). A compositionally biased stretch (basic residues) spans 64–74; it reads NNRRRDQKRKQ. The segment covering 77–89 has biased composition (polar residues); the sequence is SIKQDNDLNVSSE. The segment covering 108-135 has biased composition (basic and acidic residues); sequence YKETPDLDEPGSREKRVSQKGQLKIEKV.

This is an uncharacterized protein from Schizosaccharomyces pombe (strain 972 / ATCC 24843) (Fission yeast).